The primary structure comprises 548 residues: Adenine deaminase (548 aa).

This sequence belongs to the metallo-dependent hydrolases superfamily. Adenine deaminase family. Mn(2+) is required as a cofactor.

The catalysed reaction is adenine + H2O + H(+) = hypoxanthine + NH4(+). The polypeptide is Adenine deaminase (Borreliella afzelii (strain PKo) (Borrelia afzelii)).